Here is a 95-residue protein sequence, read N- to C-terminus: Aspartyl/glutamyl-tRNA(Asn/Gln) amidotransferase subunit C (95 aa).

Belongs to the GatC family. As to quaternary structure, heterotrimer of A, B and C subunits.

It catalyses the reaction L-glutamyl-tRNA(Gln) + L-glutamine + ATP + H2O = L-glutaminyl-tRNA(Gln) + L-glutamate + ADP + phosphate + H(+). The enzyme catalyses L-aspartyl-tRNA(Asn) + L-glutamine + ATP + H2O = L-asparaginyl-tRNA(Asn) + L-glutamate + ADP + phosphate + 2 H(+). Functionally, allows the formation of correctly charged Asn-tRNA(Asn) or Gln-tRNA(Gln) through the transamidation of misacylated Asp-tRNA(Asn) or Glu-tRNA(Gln) in organisms which lack either or both of asparaginyl-tRNA or glutaminyl-tRNA synthetases. The reaction takes place in the presence of glutamine and ATP through an activated phospho-Asp-tRNA(Asn) or phospho-Glu-tRNA(Gln). The polypeptide is Aspartyl/glutamyl-tRNA(Asn/Gln) amidotransferase subunit C (Bradyrhizobium sp. (strain ORS 278)).